A 372-amino-acid polypeptide reads, in one-letter code: Flap endonuclease 1 (372 aa).

Residues 1-105 form an N-domain region; it reads MGVKGLNQLI…GELEKRLLRR (105 aa). Aspartate 34 contacts Mg(2+). DNA is bound by residues arginine 47 and arginine 71. Mg(2+) contacts are provided by aspartate 87, glutamate 159, glutamate 161, aspartate 180, and aspartate 182. The segment at 123–254 is I-domain; it reads EVLKFEKRLV…ATAFKLIKEH (132 aa). DNA is bound at residue glutamate 159. DNA contacts are provided by glycine 232 and aspartate 234. Residue aspartate 234 coordinates Mg(2+). Residues 339-347 form an interaction with PCNA region; sequence VQGRLDGFF.

Belongs to the XPG/RAD2 endonuclease family. FEN1 subfamily. As to quaternary structure, interacts with PCNA. Three molecules of RAD27 bind to one PCNA trimer with each molecule binding to one PCNA monomer. PCNA stimulates the nuclease activity without altering cleavage specificity. The cofactor is Mg(2+). In terms of processing, phosphorylated. Phosphorylation upon DNA damage induces relocalization to the nuclear plasma.

The protein resides in the nucleus. It localises to the nucleolus. It is found in the nucleoplasm. Its subcellular location is the mitochondrion. In terms of biological role, structure-specific nuclease with 5'-flap endonuclease and 5'-3' exonuclease activities involved in DNA replication and repair. During DNA replication, cleaves the 5'-overhanging flap structure that is generated by displacement synthesis when DNA polymerase encounters the 5'-end of a downstream Okazaki fragment. It enters the flap from the 5'-end and then tracks to cleave the flap base, leaving a nick for ligation. Also involved in the long patch base excision repair (LP-BER) pathway, by cleaving within the apurinic/apyrimidinic (AP) site-terminated flap. Acts as a genome stabilization factor that prevents flaps from equilibrating into structures that lead to duplications and deletions. Also possesses 5'-3' exonuclease activity on nicked or gapped double-stranded DNA, and exhibits RNase H activity. Also involved in replication and repair of rDNA and in repairing mitochondrial DNA. This Candida dubliniensis (strain CD36 / ATCC MYA-646 / CBS 7987 / NCPF 3949 / NRRL Y-17841) (Yeast) protein is Flap endonuclease 1.